The chain runs to 237 residues: MAQLDAQAIINYIGTAPKKTPVKVYVKGTDLKALTFPAEVEAFVEQTTGVLFGDWQVLKPFLAEHEADFAAVRVENAARNSAVPLLDLKEVNARIEPGATIRDQVLIGDNAVIMMGAVINIGAEIGEGTMIDMGAILGGRALVGKHCHIGAGTVLAGVVEPASAEPVRIDDDVLIGANAVVIEGVHVGEGAVVAAGAVVTQDVAPHTVVAGVPARYIKDVDEQTDSKTGLEDDLRKL.

This sequence belongs to the transferase hexapeptide repeat family. DapH subfamily.

The enzyme catalyses (S)-2,3,4,5-tetrahydrodipicolinate + acetyl-CoA + H2O = L-2-acetamido-6-oxoheptanedioate + CoA. The protein operates within amino-acid biosynthesis; L-lysine biosynthesis via DAP pathway; LL-2,6-diaminopimelate from (S)-tetrahydrodipicolinate (acetylase route): step 1/3. Functionally, catalyzes the transfer of an acetyl group from acetyl-CoA to tetrahydrodipicolinate. In Limosilactobacillus fermentum (strain NBRC 3956 / LMG 18251) (Lactobacillus fermentum), this protein is 2,3,4,5-tetrahydropyridine-2,6-dicarboxylate N-acetyltransferase.